The sequence spans 526 residues: Dye-decolorizing peroxidase (526 aa).

The signal sequence occupies residues 1–21 (MRKSISTFILLSVLSVGQLVA). Residues 22 to 63 (ARPRSTNAPPRRRTPQPRRTTSLFINPPALPDLPTVQAVDKL) constitute a propeptide that is removed on maturation. Residue N186 is glycosylated (N-linked (GlcNAc...) asparagine). D231 acts as the Proton acceptor in catalysis. Residue N367 is glycosylated (N-linked (GlcNAc...) asparagine). Residue H376 coordinates heme. N-linked (GlcNAc...) asparagine glycosylation is found at N473 and N484.

It belongs to the DyP-type peroxidase family. The cofactor is heme b.

The protein localises to the secreted. The enzyme catalyses Reactive Blue 5 + 2 H2O2 = 2,2'-disulfonyl azobenzene + 3-[(4-amino-6-chloro-1,3,5-triazin-2-yl)amino]benzenesulfonate + phthalate + 2 H2O + 2 H(+). It carries out the reaction 2 a phenolic donor + H2O2 = 2 a phenolic radical donor + 2 H2O. Its function is as follows. Manganese-independent peroxidase that is able to convert a large number of compounds, but its physiological substrate is not known. In addition to classic peroxidase substrates (e.g. 2,6-dimethoxyphenol), oxidizes dyes such as Reactive Blue 5 and Reactive Black 5. This chain is Dye-decolorizing peroxidase, found in Mycena epipterygia (Yellow-stemmed mycena).